The primary structure comprises 358 residues: Acyl-CoA desaturase 1 (358 aa).

The Cytoplasmic segment spans residues 1–71 (MPAHMLQEIS…EGPPPKLEYV (71 aa)). Positions 8-24 (EISSSYTTTTTITEPPS) are enriched in low complexity. Residues 8 to 33 (EISSSYTTTTTITEPPSGNLQNGREK) are disordered. Residues 72 to 92 (WRNIILMALLHVGALYGITLI) traverse the membrane as a helical segment. Substrate is bound at residue Asn-74. Over 93–96 (PSSK) the chain is Lumenal. The chain crosses the membrane as a helical span at residues 97–117 (VYTLLWGIFYYLISALGITAG). Over 118–216 (AHRLWSHRTY…EKLVMFQRRY (99 aa)) the chain is Cytoplasmic. Fe cation is bound by residues His-119 and His-124. The short motif at 119–124 (HRLWSH) is the Histidine box-1 element. The substrate site is built by Asn-147, Arg-154, and Asp-155. Fe cation contacts are provided by His-156, His-159, and His-160. The short motif at 156–160 (HRAHH) is the Histidine box-2 element. The substrate site is built by Arg-187 and Lys-188. A helical transmembrane segment spans residues 217-236 (YKPGLLLMCFILPTLVPWYC). At 237-240 (WGET) the chain is on the lumenal side. Residues 241–262 (FLHSLFVSTFLRYTLVLNATWL) traverse the membrane as a helical segment. Trp-261 provides a ligand contact to substrate. The Cytoplasmic segment spans residues 263 to 358 (VNSAAHLYGY…RTGDGSHKSS (96 aa)). Fe cation is bound by residues His-268, His-297, His-300, and His-301. The short motif at 297 to 301 (HNYHH) is the Histidine box-3 element.

It belongs to the fatty acid desaturase type 1 family. It depends on Fe(2+) as a cofactor. As to expression, detected in liver (at protein level). Detected in adipose tissue. Detected in liver when rats are kept on a fat-free diet, but not when their food contains unsaturated fatty acids.

Its subcellular location is the endoplasmic reticulum membrane. It is found in the membrane. The catalysed reaction is octadecanoyl-CoA + 2 Fe(II)-[cytochrome b5] + O2 + 2 H(+) = (9Z)-octadecenoyl-CoA + 2 Fe(III)-[cytochrome b5] + 2 H2O. Stearoyl-CoA desaturase that utilizes O(2) and electrons from reduced cytochrome b5 to introduce the first double bond into saturated fatty acyl-CoA substrates. Catalyzes the insertion of a cis double bond at the Delta-9 position into fatty acyl-CoA substrates including palmitoyl-CoA and stearoyl-CoA. Gives rise to a mixture of 16:1 and 18:1 unsaturated fatty acids. Plays an important role in lipid biosynthesis. Plays an important role in regulating the expression of genes that are involved in lipogenesis and in regulating mitochondrial fatty acid oxidation. Plays an important role in body energy homeostasis. Contributes to the biosynthesis of membrane phospholipids, cholesterol esters and triglycerides. Required for normal development of sebaceous glands. Required for the biosynthesis of normal levels of Delta-9 unsaturated fatty acids and 1-alkyl-2,3-diacylglycerol in the Harderian gland. Required for normal production of meibum, an oily material that prevents drying of the cornea. In Rattus norvegicus (Rat), this protein is Acyl-CoA desaturase 1 (Scd1).